The sequence spans 779 residues: Chloride channel protein CLC-c (779 aa).

At S27 the chain carries Phosphoserine. 12 helical membrane passes run 92-112 (TFLK…VGFL), 142-162 (FAFA…CAFI), 190-210 (STLF…FVVG), 215-235 (MVHT…KKYR), 257-277 (GAAA…LFAL), 287-307 (ALLW…RSLI), 341-361 (LAIV…NYLV), 380-400 (IMLV…LPWL), 466-486 (LAIF…IAIP), 488-508 (GLFI…GRLL), 520-540 (SLLG…SLCV), and 541-561 (ILLE…VLLI). The region spanning 601–659 (DVVSGALISFSRVEKVGVIWQALKMTRHNGFPVIDEPPFTEASELCGIALRSHLLVLLQ) is the CBS 1 domain. Residue S672 is modified to Phosphoserine. In terms of domain architecture, CBS 2 spans 713-777 (ITNTSPYTVL…VLGLYPHIDP (65 aa)). Residues 741–761 (HLCVVPKTPGRPPIVGILTRH) traverse the membrane as a helical segment.

The protein belongs to the chloride channel (TC 2.A.49) family. Homodimer. Interacts with PP2A5. As to expression, broadly expressed in the plant.

It localises to the membrane. Functionally, voltage-gated chloride channel. In Arabidopsis thaliana (Mouse-ear cress), this protein is Chloride channel protein CLC-c (CLC-C).